The following is a 363-amino-acid chain: GDSL esterase/lipase At1g29670 (363 aa).

Residues 1-24 form the signal peptide; that stretch reads MESYLTKWCVVLVLLCFGFSVVKA. Catalysis depends on serine 39, which acts as the Nucleophile. Catalysis depends on residues aspartate 327 and histidine 330.

The protein belongs to the 'GDSL' lipolytic enzyme family.

Its subcellular location is the secreted. This chain is GDSL esterase/lipase At1g29670, found in Arabidopsis thaliana (Mouse-ear cress).